The following is a 147-amino-acid chain: MHRVTITLDDDLMEKLDAIIAARGYQNRSEAIRDLARIGIQQTAAETTSGHCVGAMVYTYDHSKRDLPRKLTQSFHHHHDLSRATMHVHLDHDQCLEVTILDGNASELQHFADHIFAERGVRYGRLVTIPAEPPEAHEHHHEHDASS.

Histidine 76, histidine 87, histidine 89, and cysteine 95 together coordinate Ni(2+).

Belongs to the transcriptional regulatory CopG/NikR family. Ni(2+) is required as a cofactor.

Transcriptional regulator. The chain is Putative nickel-responsive regulator from Rhodopseudomonas palustris (strain TIE-1).